A 323-amino-acid chain; its full sequence is Formyltetrahydrofolate deformylase 1, mitochondrial (323 aa).

Residues 1–25 (MIRRITERASGFAKNIPILKSSRFH) constitute a mitochondrion transit peptide. One can recognise an ACT domain in the interval 41 to 124 (VHVFHCQDAV…SVVRVPSIDP (84 aa)). The active site involves Asp-267.

The protein belongs to the PurU family. As to expression, expressed in leaves, cotyledons, roots, seeds and flowers.

The protein resides in the mitochondrion. The catalysed reaction is (6R)-10-formyltetrahydrofolate + H2O = (6S)-5,6,7,8-tetrahydrofolate + formate + H(+). Its function is as follows. Deformylase involved in photorespiration. Prevents excessive accumulation of 5-formyl tetrahydrofolate (THF), a potent inhibitor of the Gly decarboxylase/Ser hydroxymethyltransferase complex. This Arabidopsis thaliana (Mouse-ear cress) protein is Formyltetrahydrofolate deformylase 1, mitochondrial (PURU1).